Here is a 518-residue protein sequence, read N- to C-terminus: MAAAALRPPAQGTVTFEDVAVNFSQEEWSLLSEAQRCLYHDVMLENLTLISSLGCWYGAKDETPSKQTLSIQQESPLRTHWTGVCTKKVHLWGMCGPLLGDILHQGTQHNQKLNGFGAYEKKLDDDANHHQDQKQHIGEKSYRSNAKGTSFVKNCKFHMSHEPFIFHEVGKDFLSSLRLLQQEDIHTSGKSNFETKHGIPLQGGKTHYICGESTIPFSNKHSLVLHQRLLPREGPYVCSDSGKFTSKSNSFNNHQGVRTGKRPYQCGQCDESFWYKAHLTEHQRVHTGERPYECGECDKSFSHKHSLVDHQRVHTGERPYECDECGKSFSHKRSLVHHQRVHTGERPYQCGECGKSFNHKCNLIQHQRVHTGERPFECTACGKLFRSNSHLKEHQRVHTGERPYECKECRKSFRYKSHLTEHQRVHTGERPYECRECGKCFHQKGSLIQHQQIHSGERPHECGECGKCFHQKGSLIRHQQIHSGERPHECGECGKCFRQKGNLIKHQRVHTGERHHEC.

The region spanning 14–89 (VTFEDVAVNF…HWTGVCTKKV (76 aa)) is the KRAB domain. Residues K171, K196, K220, and K247 each participate in a glycyl lysine isopeptide (Lys-Gly) (interchain with G-Cter in SUMO2) cross-link. The C2H2-type 1; degenerate zinc-finger motif lies at 208-230 (YICGESTIPFSNKHSLVLHQRLL). The C2H2-type 2; degenerate zinc-finger motif lies at 236 to 258 (YVCSDSGKFTSKSNSFNNHQGVR). 7 C2H2-type zinc fingers span residues 264-286 (YQCGQCDESFWYKAHLTEHQRVH), 292-314 (YECGECDKSFSHKHSLVDHQRVH), 320-342 (YECDECGKSFSHKRSLVHHQRVH), 348-370 (YQCGECGKSFNHKCNLIQHQRVH), 376-398 (FECTACGKLFRSNSHLKEHQRVH), 404-426 (YECKECRKSFRYKSHLTEHQRVH), and 432-454 (YECRECGKCFHQKGSLIQHQQIH). The segment at 460 to 482 (HECGECGKCFHQKGSLIRHQQIH) adopts a C2H2-type 10; degenerate zinc-finger fold. A C2H2-type 11 zinc finger spans residues 488 to 510 (HECGECGKCFRQKGNLIKHQRVH).

Belongs to the krueppel C2H2-type zinc-finger protein family.

It localises to the nucleus. May be involved in transcriptional regulation. This Homo sapiens (Human) protein is Zinc finger protein 776 (ZNF776).